The chain runs to 942 residues: Ubiquitin carboxyl-terminal hydrolase 33 (942 aa).

A UBP-type zinc finger spans residues 37–140; it reads NHCPHLDSVG…PSLPHVRQPH (104 aa). Cysteine 39, histidine 41, cysteine 61, cysteine 64, cysteine 74, cysteine 79, cysteine 84, histidine 91, histidine 95, histidine 101, cysteine 114, and cysteine 117 together coordinate Zn(2+). The USP domain maps to 185–715; it reads TGLKNIGNTC…EAYVLFYRKS (531 aa). Cysteine 194 functions as the Nucleophile in the catalytic mechanism. The segment at 294–357 is disordered; it reads VEEDPQTITT…MLIQDDENNS (64 aa). Over residues 315 to 327 the composition is skewed to polar residues; it reads DVDFQSCESCSNS. Serine 377 is subject to Phosphoserine. The segment covering 419–431 has biased composition (polar residues); the sequence is DLSTPQILPSNEG. The disordered stretch occupies residues 419-469; it reads DLSTPQILPSNEGVNPRLSASPPKSGNLWPGLAPPHKKAQSASPKRKKQHK. Serine 439 carries the phosphoserine modification. The segment covering 453–469 has biased composition (basic residues); it reads PHKKAQSASPKRKKQHK. The active-site Proton acceptor is histidine 673. 2 DUSP domains span residues 717–810 and 818–921; these read EEAQ…LYIC and EKIE…RPPV.

This sequence belongs to the peptidase C19 family. USP20/USP33 subfamily. Interacts with VHL, leading to its ubiquitination and subsequent degradation. Interacts with ARRB1 and ARRB2. Interacts with ADRB2. Interacts with DIO2. Interacts with ROBO1. Interacts with SELENBP1; in a selenium-dependent manner. Interacts with CCP110. In terms of processing, ubiquitinated via a VHL-dependent pathway for proteasomal degradation. In terms of tissue distribution, widely expressed.

It is found in the cytoplasm. The protein localises to the perinuclear region. Its subcellular location is the cytoskeleton. The protein resides in the microtubule organizing center. It localises to the centrosome. It is found in the golgi apparatus. It catalyses the reaction Thiol-dependent hydrolysis of ester, thioester, amide, peptide and isopeptide bonds formed by the C-terminal Gly of ubiquitin (a 76-residue protein attached to proteins as an intracellular targeting signal).. Functionally, deubiquitinating enzyme involved in various processes such as centrosome duplication, cellular migration and beta-2 adrenergic receptor/ADRB2 recycling. Involved in regulation of centrosome duplication by mediating deubiquitination of CCP110 in S and G2/M phase, leading to stabilize CCP110 during the period which centrioles duplicate and elongate. Involved in cell migration via its interaction with intracellular domain of ROBO1, leading to regulate the Slit signaling. Plays a role in commissural axon guidance cross the ventral midline of the neural tube in a Slit-dependent manner, possibly by mediating the deubiquitination of ROBO1. Acts as a regulator of G-protein coupled receptor (GPCR) signaling by mediating the deubiquitination of beta-arrestins (ARRB1 and ARRB2) and beta-2 adrenergic receptor (ADRB2). Plays a central role in ADRB2 recycling and resensitization after prolonged agonist stimulation by constitutively binding ADRB2, mediating deubiquitination of ADRB2 and inhibiting lysosomal trafficking of ADRB2. Upon dissociation, it is probably transferred to the translocated beta-arrestins, leading to beta-arrestins deubiquitination and disengagement from ADRB2. This suggests the existence of a dynamic exchange between the ADRB2 and beta-arrestins. Deubiquitinates DIO2, thereby regulating thyroid hormone regulation. Mediates deubiquitination of both 'Lys-48'- and 'Lys-63'-linked polyubiquitin chains. The protein is Ubiquitin carboxyl-terminal hydrolase 33 (USP33) of Homo sapiens (Human).